Here is a 471-residue protein sequence, read N- to C-terminus: Major facilitator-type transporter psiT1 (471 aa).

The segment at 1–36 (MNPTTATDAHERTSLLSGRPQSAANSTAPYERQVQP) is disordered. The span at 14–36 (SLLSGRPQSAANSTAPYERQVQP) shows a compositional bias: polar residues. The N-linked (GlcNAc...) asparagine glycan is linked to asparagine 25. 8 helical membrane-spanning segments follow: residues 44–64 (TPVTVITIITLIYRLATTMVI), 108–128 (AIMVSMTTVIDGLGGILGTGI), 140–160 (PVLMFLLSCTMIDHLAILTVQ), 168–188 (LVTFGLIMIVETIGNENTTVF), 212–232 (GWLVLGGALAYSIGGSITTFL), 237–257 (AVYIVSFSVTGIVLTFTAFVL), 322–342 (LHSFIVTLADAYALPAMLIFF), and 356–376 (VMTTYSVSSVFVLAIALPLFI). An N-linked (GlcNAc...) asparagine glycan is attached at asparagine 384. A helical transmembrane segment spans residues 424-444 (VHITVISWTIESLAYIVLGTV).

This sequence belongs to the major facilitator superfamily. TCR/Tet family.

It is found in the membrane. Major facilitator-type transporter; part of the gene cluster that mediates the biosynthesis of psilocybin, a psychotropic tryptamine-derived natural product. In Psilocybe cyanescens, this protein is Major facilitator-type transporter psiT1.